The following is a 776-amino-acid chain: Meiotic expression up-regulated protein 1/2 (776 aa).

Coiled-coil stretches lie at residues 87 to 122 (YVLK…AQEE), 173 to 227 (FSEL…DLKE), 265 to 307 (YKVE…NDEE), 362 to 430 (KMSQ…RNNS), and 496 to 595 (INNQ…NTEL).

This Schizosaccharomyces pombe (strain 972 / ATCC 24843) (Fission yeast) protein is Meiotic expression up-regulated protein 1/2 (meu1).